Here is a 330-residue protein sequence, read N- to C-terminus: MYTEINEMLTPKVLKVQAESPYKARIVLEPLERGFGHTLGNALRRILLSSMPGSAITEASIDGVLHEYSTIEGVQEDVVDLLLNLKSVAIKLTVGNEAQVTLNKEGPCQVTAGDIQLTHGQEIINPELVIANLNEKGKLNMTLKVERGIGFHNTDAFVRYHEDEIEKKTVGKLKIDNSFSPVKKVAYFVDSARVENRTDLDKLTIELETNGTIDAEEAIRISASILQRQLHAFVDMKFEESRADNKERNDFDPVLLRSVDDLELTVRSANCLKAENIHYIGDLVQRTESELLKTPNLGKKSLTEIKDVLASRSLSLGMKLENWPPASLGE.

Residues 1 to 237 (MYTEINEMLT…RQLHAFVDMK (237 aa)) are alpha N-terminal domain (alpha-NTD). Positions 251–330 (FDPVLLRSVD…ENWPPASLGE (80 aa)) are alpha C-terminal domain (alpha-CTD).

The protein belongs to the RNA polymerase alpha chain family. As to quaternary structure, homodimer. The RNAP catalytic core consists of 2 alpha, 1 beta, 1 beta' and 1 omega subunit. When a sigma factor is associated with the core the holoenzyme is formed, which can initiate transcription.

It catalyses the reaction RNA(n) + a ribonucleoside 5'-triphosphate = RNA(n+1) + diphosphate. In terms of biological role, DNA-dependent RNA polymerase catalyzes the transcription of DNA into RNA using the four ribonucleoside triphosphates as substrates. The protein is DNA-directed RNA polymerase subunit alpha of Legionella pneumophila (strain Corby).